We begin with the raw amino-acid sequence, 240 residues long: UDP-2,3-diacylglucosamine hydrolase (240 aa).

Mn(2+) is bound by residues Asp-8, His-10, Asp-41, Asn-78, and His-113. Residue 78 to 79 (NR) participates in substrate binding. Substrate contacts are provided by Asp-121, Ser-159, Asn-163, Lys-166, and His-194. The Mn(2+) site is built by His-194 and His-196.

This sequence belongs to the LpxH family. Requires Mn(2+) as cofactor.

The protein localises to the cell inner membrane. The enzyme catalyses UDP-2-N,3-O-bis[(3R)-3-hydroxytetradecanoyl]-alpha-D-glucosamine + H2O = 2-N,3-O-bis[(3R)-3-hydroxytetradecanoyl]-alpha-D-glucosaminyl 1-phosphate + UMP + 2 H(+). It participates in glycolipid biosynthesis; lipid IV(A) biosynthesis; lipid IV(A) from (3R)-3-hydroxytetradecanoyl-[acyl-carrier-protein] and UDP-N-acetyl-alpha-D-glucosamine: step 4/6. Hydrolyzes the pyrophosphate bond of UDP-2,3-diacylglucosamine to yield 2,3-diacylglucosamine 1-phosphate (lipid X) and UMP by catalyzing the attack of water at the alpha-P atom. Involved in the biosynthesis of lipid A, a phosphorylated glycolipid that anchors the lipopolysaccharide to the outer membrane of the cell. The chain is UDP-2,3-diacylglucosamine hydrolase from Shewanella baltica (strain OS223).